Here is a 466-residue protein sequence, read N- to C-terminus: 55 kDa erythrocyte membrane protein (466 aa).

An N-acetylthreonine modification is found at threonine 2. Position 19 is a phosphoserine (serine 19). At threonine 49 the chain carries Phosphothreonine. Residues serine 57 and serine 110 each carry the phosphoserine modification. In terms of domain architecture, PDZ spans 71 to 152 (LIQFEKVTEE…MISLKVIPNQ (82 aa)). In terms of domain architecture, SH3 spans 158–228 (ALQMFMRAQF…PSPELQEWRV (71 aa)). Serine 243 carries the phosphoserine modification. Residues 268 to 466 (VVSYEEVVRL…PQWVPVSWVY (199 aa)) are interaction with PALS1. The Guanylate kinase-like domain maps to 282–451 (RKTLVLIGAS…TLKTLQETFD (170 aa)).

It belongs to the MAGUK family. As to quaternary structure, heterodimer with PALS1. Interacts with DLG5 and NF2. Interacts (via guanylate kinase-like domain) with WHRN (via third PDZ domain). Interacts with PALS1. Palmitoylated.

It localises to the cell membrane. It is found in the cell projection. The protein localises to the stereocilium. Functionally, essential regulator of neutrophil polarity. Regulates neutrophil polarization by regulating AKT1 phosphorylation through a mechanism that is independent of PIK3CG activity. This is 55 kDa erythrocyte membrane protein (MPP1) from Bos taurus (Bovine).